The sequence spans 23 residues: Potassium channel toxin alpha-KTx 13.4 (23 aa).

Disulfide bonds link Cys2/Cys15, Cys5/Cys20, and Cys9/Cys22. The interaction with Ca(2+)-activated K(+) channels stretch occupies residues 13-20 (GKCINGKC). Residue Tyr23 is modified to Tyrosine amide.

As to expression, expressed by the venom gland.

Its subcellular location is the secreted. Functionally, blocks the potassium channel Shaker B. The chain is Potassium channel toxin alpha-KTx 13.4 from Tityus stigmurus (Brazilian scorpion).